Reading from the N-terminus, the 163-residue chain is Succinate dehydrogenase assembly factor 2, mitochondrial (163 aa).

The protein belongs to the SDHAF2 family. In terms of assembly, interacts with the flavoprotein subunit within the SDH catalytic dimer.

It is found in the mitochondrion matrix. Plays an essential role in the assembly of succinate dehydrogenase (SDH), an enzyme complex (also referred to as respiratory complex II) that is a component of both the tricarboxylic acid (TCA) cycle and the mitochondrial electron transport chain, and which couples the oxidation of succinate to fumarate with the reduction of ubiquinone (coenzyme Q) to ubiquinol. Required for flavinylation (covalent attachment of FAD) of the flavoprotein subunit of the SDH catalytic dimer. The chain is Succinate dehydrogenase assembly factor 2, mitochondrial from Kluyveromyces lactis (strain ATCC 8585 / CBS 2359 / DSM 70799 / NBRC 1267 / NRRL Y-1140 / WM37) (Yeast).